A 347-amino-acid chain; its full sequence is Endophilin-A3 (347 aa).

The membrane-binding amphipathic helix stretch occupies residues 1 to 21; it reads MSVAGLKKQFHKASQLFSEKI. The BAR domain occupies 18-249; it reads SEKISGAEGT…LELRIALASQ (232 aa). The tract at residues 60–87 is required for dimerization upon membrane association; sequence PNPAYRAKLGMLNTMSKLRGQVKATGYP. The stretch at 180-201 forms a coiled coil; sequence EEEIRQAVEKFEESKELAERSM. Residues 218-254 are interaction with ARC; that stretch reads FVEAALDYHRQSTEILQELQNKLELRIALASQVPRRD. Residues 255–284 form a disordered region; sequence YMPKPVNTSSTNANGVEPSSSSKLTGTDIP. The span at 260–284 shows a compositional bias: polar residues; it reads VNTSSTNANGVEPSSSSKLTGTDIP. One can recognise an SH3 domain in the interval 285-344; that stretch reads SDQPCCRGLYDFEPENEGELGFKEGDIITLTNQIDENWYEGMLRGESGFFPINYVEVIVP.

Belongs to the endophilin family. Interacts with SGIP1 and DYDC1. Interacts with FASLG. Interacts with ATXN2. Interacts with BIN2. Interacts with ARC, DNM1 and SYNJ1. In terms of tissue distribution, expressed at high level in testis and at lower level in brain and liver.

The protein localises to the cytoplasm. It localises to the early endosome membrane. In terms of biological role, implicated in endocytosis. May recruit other proteins to membranes with high curvature. The chain is Endophilin-A3 (Sh3gl3) from Rattus norvegicus (Rat).